The sequence spans 410 residues: Voltage-dependent chloride channel 1, chloroplastic (410 aa).

The Lumenal, thylakoid segment spans residues 1 to 110 (MYQSMNLSVS…RHLLSSFSSR (110 aa)). The helical transmembrane segment at 111–131 (VILSLIPPVFFFTSVAVVIAS) threads the bilayer. Topologically, residues 132 to 147 (YNSAVALDWLPGIFPI) are stromal. The chain crosses the membrane as a helical span at residues 148-168 (LRSSSLPYQLTAPALALLLVF). Residues 169–315 (RTEASYSRYE…PLSYTRLTSR (147 aa)) lie on the Lumenal, thylakoid side of the membrane. A run of 2 helical transmembrane segments spans residues 316-336 (FLVF…HWIV) and 337-357 (VPAT…GVLI). The Lumenal, thylakoid segment spans residues 358–410 (EEPFPMLALDELCDLVHSNIQEAVKSEKVIRNRIIAKIKLHEFKHSSNGRHRS).

The protein belongs to the anion channel-forming bestrophin (TC 1.A.46) family. Voltage-dependent chloride channel subfamily. Mostly expressed in flowers and leaves and, to a lower extent, in stems and roots.

It localises to the plastid. It is found in the chloroplast thylakoid membrane. The enzyme catalyses chloride(in) = chloride(out). More active at positive than at negative voltages. Repressed by the general anion channel inhibitors dithiocyanatostilbene-2,20-disulphonic acid (DIDS) and niflumic acid. In terms of biological role, voltage-dependent chloride (Cl) channel critical for proton motive force (PMF) partitioning across the thylakoid membrane by anion influx into the lumen during illumination, thus being required for photoprotection under fluctuating light conditions. Influences thylakoid ultrastructure, including lumen size and organization. During photosynthetic response on transition from dark to low light, involved in a sequential mechanism of adaptation; VCCN1 and CLCe first trigger the activation of photoprotection, which is later down-regulated by KEA3 to a low steady state, while adjusting electron transport. On transition from low to high light, accelerates the activation of photoprotection by building up a pH gradient across the thylakoid membrane. This Arabidopsis thaliana (Mouse-ear cress) protein is Voltage-dependent chloride channel 1, chloroplastic.